The sequence spans 153 residues: Ribosome maturation factor RimP (153 aa).

This sequence belongs to the RimP family.

The protein resides in the cytoplasm. Functionally, required for maturation of 30S ribosomal subunits. This chain is Ribosome maturation factor RimP, found in Chromohalobacter salexigens (strain ATCC BAA-138 / DSM 3043 / CIP 106854 / NCIMB 13768 / 1H11).